The primary structure comprises 172 residues: Adenine phosphoribosyltransferase (172 aa).

This sequence belongs to the purine/pyrimidine phosphoribosyltransferase family. In terms of assembly, homodimer.

The protein localises to the cytoplasm. It catalyses the reaction AMP + diphosphate = 5-phospho-alpha-D-ribose 1-diphosphate + adenine. Its pathway is purine metabolism; AMP biosynthesis via salvage pathway; AMP from adenine: step 1/1. Functionally, catalyzes a salvage reaction resulting in the formation of AMP, that is energically less costly than de novo synthesis. The chain is Adenine phosphoribosyltransferase from Gloeothece citriformis (strain PCC 7424) (Cyanothece sp. (strain PCC 7424)).